Here is a 476-residue protein sequence, read N- to C-terminus: Cytosolic iron-sulfur assembly component 3 (476 aa).

Ala2 bears the N-acetylalanine mark. Residues Cys24, Cys71, Cys74, Cys77, Cys190, Cys246, Cys395, and Cys399 each coordinate [4Fe-4S] cluster.

The protein belongs to the NARF family. As to quaternary structure, external component of the CIA complex. In the CIA complex, interacts directly with CIAO1 and MMS19.

Functionally, component of the cytosolic iron-sulfur protein assembly (CIA) complex, a multiprotein complex that mediates the incorporation of iron-sulfur cluster into extramitochondrial Fe/S proteins. Seems to negatively regulate the level of HIF1A expression, although this effect could be indirect. The protein is Cytosolic iron-sulfur assembly component 3 of Rattus norvegicus (Rat).